A 119-amino-acid chain; its full sequence is Large ribosomal subunit protein bL20 (119 aa).

This sequence belongs to the bacterial ribosomal protein bL20 family.

Its function is as follows. Binds directly to 23S ribosomal RNA and is necessary for the in vitro assembly process of the 50S ribosomal subunit. It is not involved in the protein synthesizing functions of that subunit. This Clostridium perfringens (strain ATCC 13124 / DSM 756 / JCM 1290 / NCIMB 6125 / NCTC 8237 / Type A) protein is Large ribosomal subunit protein bL20.